We begin with the raw amino-acid sequence, 424 residues long: Tubby protein homolog 1 (424 aa).

The disordered stretch occupies residues 19–47 (MLEDKQKQKRHQSAGSVRTTTTTSSMSMN). Over residues 37–47 (TTTTTSSMSMN) the composition is skewed to low complexity.

This sequence belongs to the TUB family. In terms of assembly, interacts with rgb-3.

It is found in the cytoplasm. Its subcellular location is the cell projection. It localises to the axon. The protein localises to the dendrite. The protein resides in the cilium. Functionally, has a role in fat regulation independent of daf-16. Implicated in ciliar sensory function which is required for normal sensory behavior such as chemotaxis. Functions in life span control via the insulin/IGF-1 pathway. Thought to be involved in neuronal trafficking. In Caenorhabditis briggsae, this protein is Tubby protein homolog 1.